A 176-amino-acid polypeptide reads, in one-letter code: Endoribonuclease YbeY (176 aa).

Zn(2+)-binding residues include His138, His142, and His148.

This sequence belongs to the endoribonuclease YbeY family. Zn(2+) serves as cofactor.

Its subcellular location is the cytoplasm. Its function is as follows. Single strand-specific metallo-endoribonuclease involved in late-stage 70S ribosome quality control and in maturation of the 3' terminus of the 16S rRNA. In Trichormus variabilis (strain ATCC 29413 / PCC 7937) (Anabaena variabilis), this protein is Endoribonuclease YbeY.